The primary structure comprises 252 residues: Imidazole glycerol phosphate synthase subunit HisF (252 aa).

Catalysis depends on residues aspartate 11 and aspartate 130.

This sequence belongs to the HisA/HisF family. As to quaternary structure, heterodimer of HisH and HisF.

It is found in the cytoplasm. It catalyses the reaction 5-[(5-phospho-1-deoxy-D-ribulos-1-ylimino)methylamino]-1-(5-phospho-beta-D-ribosyl)imidazole-4-carboxamide + L-glutamine = D-erythro-1-(imidazol-4-yl)glycerol 3-phosphate + 5-amino-1-(5-phospho-beta-D-ribosyl)imidazole-4-carboxamide + L-glutamate + H(+). The protein operates within amino-acid biosynthesis; L-histidine biosynthesis; L-histidine from 5-phospho-alpha-D-ribose 1-diphosphate: step 5/9. IGPS catalyzes the conversion of PRFAR and glutamine to IGP, AICAR and glutamate. The HisF subunit catalyzes the cyclization activity that produces IGP and AICAR from PRFAR using the ammonia provided by the HisH subunit. The sequence is that of Imidazole glycerol phosphate synthase subunit HisF from Halothermothrix orenii (strain H 168 / OCM 544 / DSM 9562).